The sequence spans 274 residues: Large ribosomal subunit protein uL2 (274 aa).

Disordered regions lie at residues 36–61 (QKSKTGGRNSNGRITTRHRGGGHKQR) and 223–274 (VAMN…RRKR). Positions 37-46 (KSKTGGRNSN) are enriched in polar residues. Basic residues-rich tracts occupy residues 50–61 (TTRHRGGGHKQR) and 254–274 (KGHKTRKNKRTDKYIVRRRKR).

The protein belongs to the universal ribosomal protein uL2 family. As to quaternary structure, part of the 50S ribosomal subunit. Forms a bridge to the 30S subunit in the 70S ribosome.

In terms of biological role, one of the primary rRNA binding proteins. Required for association of the 30S and 50S subunits to form the 70S ribosome, for tRNA binding and peptide bond formation. It has been suggested to have peptidyltransferase activity; this is somewhat controversial. Makes several contacts with the 16S rRNA in the 70S ribosome. This Halorhodospira halophila (strain DSM 244 / SL1) (Ectothiorhodospira halophila (strain DSM 244 / SL1)) protein is Large ribosomal subunit protein uL2.